The following is a 313-amino-acid chain: Secretory carrier-associated membrane protein 4 (313 aa).

The disordered stretch occupies residues Met-1 to Asn-69. At Met-1–Gln-148 the chain is on the cytoplasmic side. Residues Met-85–Ala-116 adopt a coiled-coil conformation. 4 consecutive transmembrane segments (helical) span residues Tyr-149–Val-169, Ile-181–Tyr-201, Phe-216–Ser-236, and Leu-255–Leu-275. Topologically, residues Glu-276–Phe-313 are cytoplasmic.

Belongs to the SCAMP family.

The protein localises to the cell membrane. The protein resides in the cytoplasmic vesicle. Its subcellular location is the secretory vesicle membrane. Its function is as follows. Probably involved in membrane trafficking. The sequence is that of Secretory carrier-associated membrane protein 4 (SCAMP4) from Oryza sativa subsp. japonica (Rice).